A 149-amino-acid polypeptide reads, in one-letter code: Large ribosomal subunit protein uL15 (149 aa).

The tract at residues K14–L57 is disordered. Gly residues-rich tracts occupy residues R21–N35 and S42–G52.

It belongs to the universal ribosomal protein uL15 family. In terms of assembly, part of the 50S ribosomal subunit.

Binds to the 23S rRNA. In Oleidesulfovibrio alaskensis (strain ATCC BAA-1058 / DSM 17464 / G20) (Desulfovibrio alaskensis), this protein is Large ribosomal subunit protein uL15.